The sequence spans 253 residues: RBPJ-interacting and tubulin-associated protein 1 (253 aa).

Disordered stretches follow at residues 30–89 (SPAR…KNKY), 127–175 (TPPA…LCVP), and 188–253 (HLTV…PPWK). The segment covering 71-81 (SPSSRGSTPNL) has biased composition (polar residues). The Nuclear localization signal signature appears at 81–97 (LTPRKKNKYRLIGHAPS). The interaction with RBPJ/RBPSUH stretch occupies residues 112–140 (RMAVGDAAKLRTLFWTPPATPRGSHTPCP). The tract at residues 140–253 (PRETPLRAIH…CPPKPKPPWK (114 aa)) is interaction with tubulin. Positions 188-228 (HLTVPSTGHPASSAPQTNGPWSPRPNTSGATVQSPLVTSKA) are enriched in polar residues.

The protein belongs to the RITA family. Interacts with RBPJ/RBPSUH.

The protein localises to the cytoplasm. The protein resides in the nucleus. It localises to the cytoskeleton. Its subcellular location is the microtubule organizing center. It is found in the centrosome. Its function is as follows. Tubulin-binding protein that acts as a negative regulator of Notch signaling pathway. Shuttles between the cytoplasm and the nucleus and mediates the nuclear export of RBPJ/RBPSUH, thereby preventing the interaction between RBPJ/RBPSUH and NICD product of Notch proteins (Notch intracellular domain), leading to down-regulate Notch-mediated transcription. May play a role in neurogenesis. This chain is RBPJ-interacting and tubulin-associated protein 1 (Rita1), found in Mus musculus (Mouse).